Here is a 737-residue protein sequence, read N- to C-terminus: Transcriptional repressor CTCF (737 aa).

Methionine 1 carries the N-acetylmethionine modification. Lysine 18 participates in a covalent cross-link: Glycyl lysine isopeptide (Lys-Gly) (interchain with G-Cter in SUMO2). Residue lysine 74 forms a Glycyl lysine isopeptide (Lys-Gly) (interchain with G-Cter in SUMO) linkage. Residues 180–211 are disordered; sequence QGELPPQEDPSWQKDPDYQPPAKKTKKTKKSK. Positions 202–211 are enriched in basic residues; it reads KKTKKTKKSK. Residue lysine 219 forms a Glycyl lysine isopeptide (Lys-Gly) (interchain with G-Cter in SUMO2) linkage. A C2H2-type 1 zinc finger spans residues 266–288; that stretch reads FQCELCSYTCPRRSNLDRHMKSH. Threonine 289 bears the Phosphothreonine mark. The C2H2-type 2 zinc finger occupies 294-316; sequence HKCHLCGRAFRTVTLLRNHLNTH. Threonine 317 carries the post-translational modification Phosphothreonine. 2 consecutive C2H2-type zinc fingers follow at residues 322–345 and 351–373; these read HKCPDCDMAFVTSGELVRHRRYKH and FKCSMCDYASVEVSKLKRHIRSH. Residue threonine 374 is modified to Phosphothreonine. A C2H2-type 5 zinc finger spans residues 379–401; it reads FQCSLCSYASRDTYKLKRHMRTH. Residue serine 402 is modified to Phosphoserine. 5 consecutive C2H2-type zinc fingers follow at residues 407–430, 437–460, 467–489, 495–517, and 523–546; these read YECYICHARFTQSGTMKMHILQKH, FHCPHCDTVIARKSDLGVHLRKQH, KKCRYCDAVFHERYALIQHQKSH, FKCDQCDYACRQERHMIMHKRTH, and YACSHCDKTFRQKQLLDMHFKRYH. A C2H2-type 11; atypical zinc finger spans residues 555–577; the sequence is FVCSKCGKTFTRRNTMARHADNC. 2 disordered regions span residues 573–687 and 699–727; these read HADN…EDQN and KKEPDAEPAEGEEEEAQAAPADAPNGDLT. Over residues 593 to 604 the composition is skewed to basic residues; the sequence is KSKRGRKRKMRS. Phosphoserine is present on residues serine 609, serine 610, and serine 612. The segment covering 610 to 636 has biased composition (acidic residues); it reads SDSENAEPDLDDNEEEEEPAVEIEPEP. Positions 637–657 are enriched in pro residues; sequence EPQPQPQPQPQPQPVAPAPPP. A compositionally biased stretch (polar residues) spans 668–687; it reads RTNQPKQNQPTAIIQVEDQN. A Glycyl lysine isopeptide (Lys-Gly) (interchain with G-Cter in SUMO); alternate cross-link involves residue lysine 699. Residue lysine 699 forms a Glycyl lysine isopeptide (Lys-Gly) (interchain with G-Cter in SUMO2); alternate linkage. The segment covering 704–714 has biased composition (acidic residues); that stretch reads AEPAEGEEEEA.

Belongs to the CTCF zinc-finger protein family. Interacts with CHD8. Interacts with LLPH. Interacts with CENPE. Interacts with BRD2; promoting BRD2 recruitment to chromatin. Post-translationally, sumoylated on Lys-74 and Lys-699; sumoylation of CTCF contributes to the repressive function of CTCF on the MYC P2 promoter.

The protein localises to the nucleus. The protein resides in the nucleoplasm. Its subcellular location is the chromosome. It localises to the centromere. Chromatin binding factor that binds to DNA sequence specific sites and regulates the 3D structure of chromatin. Binds together strands of DNA, thus forming chromatin loops, and anchors DNA to cellular structures, such as the nuclear lamina. Defines the boundaries between active and heterochromatic DNA via binding to chromatin insulators, thereby preventing interaction between promoter and nearby enhancers and silencers. Plays a critical role in the epigenetic regulation. Participates in the allele-specific gene expression at the imprinted IGF2/H19 gene locus. On the maternal allele, binding within the H19 imprinting control region (ICR) mediates maternally inherited higher-order chromatin conformation to restrict enhancer access to IGF2. Mediates interchromosomal association between IGF2/H19 and WSB1/NF1 and may direct distant DNA segments to a common transcription factory. Regulates asynchronous replication of IGF2/H19. Plays a critical role in gene silencing over considerable distances in the genome. Preferentially interacts with unmethylated DNA, preventing spreading of CpG methylation and maintaining methylation-free zones. Inversely, binding to target sites is prevented by CpG methylation. Plays an important role in chromatin remodeling. Can dimerize when it is bound to different DNA sequences, mediating long-range chromatin looping. Causes local loss of histone acetylation and gain of histone methylation in the beta-globin locus, without affecting transcription. When bound to chromatin, it provides an anchor point for nucleosomes positioning. Seems to be essential for homologous X-chromosome pairing. May participate with Tsix in establishing a regulatable epigenetic switch for X chromosome inactivation. May play a role in preventing the propagation of stable methylation at the escape genes from X-inactivation. Involved in sister chromatid cohesion. Associates with both centromeres and chromosomal arms during metaphase and required for cohesin localization to CTCF sites. Plays a role in the recruitment of CENPE to the pericentromeric/centromeric regions of the chromosome during mitosis. Acts as a transcriptional repressor binding to promoters of vertebrate MYC gene and BAG1 gene. Also binds to the PLK and PIM1 promoters. Acts as a transcriptional activator of APP. Regulates APOA1/C3/A4/A5 gene cluster and controls MHC class II gene expression. Plays an essential role in oocyte and preimplantation embryo development by activating or repressing transcription. Seems to act as tumor suppressor. This Rattus norvegicus (Rat) protein is Transcriptional repressor CTCF (Ctcf).